The primary structure comprises 341 residues: MSDTVVSLASSQAPDAVRQDIRHDWTLAEIQAIHDMPLLDLVHRAGTVHRAHNDPADIQRAALLSIKTGGCPEDCAYCPQSAHHKGANLPRERLMPVDAVLKEAAAAKANGAHRFCMGAAWRKPKDGPEFDAVLEMVRGVRGLGMEACVTLGMLTQSQAQRLAEAGLTSYNHNLDTGPEFYGDIISTRTYDDRLQTLEHVRQAGIGVCCGGIVGMGERVRDRAEMLLVLANHAPHPESVPINALVAVEGTPLEDRPPIDPLDLVRMCATARIVMPKARVRLSAGRKSLTREAQILCFLAGANSIFYGERLLTTANNEADADAELLRDIGVPVPEVTLAAAE.

The Radical SAM core domain maps to 56–285 (ADIQRAALLS…KARVRLSAGR (230 aa)). Residues C71, C75, and C78 each coordinate [4Fe-4S] cluster. Residues C116, C148, C208, and R280 each coordinate [2Fe-2S] cluster.

The protein belongs to the radical SAM superfamily. Biotin synthase family. As to quaternary structure, homodimer. Requires [4Fe-4S] cluster as cofactor. The cofactor is [2Fe-2S] cluster.

The catalysed reaction is (4R,5S)-dethiobiotin + (sulfur carrier)-SH + 2 reduced [2Fe-2S]-[ferredoxin] + 2 S-adenosyl-L-methionine = (sulfur carrier)-H + biotin + 2 5'-deoxyadenosine + 2 L-methionine + 2 oxidized [2Fe-2S]-[ferredoxin]. The protein operates within cofactor biosynthesis; biotin biosynthesis; biotin from 7,8-diaminononanoate: step 2/2. Its function is as follows. Catalyzes the conversion of dethiobiotin (DTB) to biotin by the insertion of a sulfur atom into dethiobiotin via a radical-based mechanism. This chain is Biotin synthase, found in Methylorubrum populi (strain ATCC BAA-705 / NCIMB 13946 / BJ001) (Methylobacterium populi).